We begin with the raw amino-acid sequence, 508 residues long: GMP synthase [glutamine-hydrolyzing] (508 aa).

The 189-residue stretch at 1–189 (MILVLDFGSQ…ALLVCGCEKT (189 aa)) folds into the Glutamine amidotransferase type-1 domain. Cysteine 78 acts as the Nucleophile in catalysis. Catalysis depends on residues histidine 163 and glutamate 165. The GMPS ATP-PPase domain occupies 190-383 (WGMQHFAQRE…LGVSQDFLMR (194 aa)). An ATP-binding site is contributed by 217 to 223 (SGGVDST).

In terms of assembly, homodimer.

The catalysed reaction is XMP + L-glutamine + ATP + H2O = GMP + L-glutamate + AMP + diphosphate + 2 H(+). It participates in purine metabolism; GMP biosynthesis; GMP from XMP (L-Gln route): step 1/1. Catalyzes the synthesis of GMP from XMP. The polypeptide is GMP synthase [glutamine-hydrolyzing] (Helicobacter pylori (strain P12)).